The sequence spans 315 residues: tRNA-specific adenosine deaminase subunit tad3 (315 aa).

Residues 158–299 (KRIESILEDL…AELNHRYLAY (142 aa)) enclose the CMP/dCMP-type deaminase domain. Zn(2+)-binding residues include H211, C253, and C256.

This sequence belongs to the cytidine and deoxycytidylate deaminase family. ADAT3 subfamily. Heterodimer with Tad2.

The protein localises to the cytoplasm. It is found in the nucleus. Structural subunit of tRNA-specific adenosine deaminase, which deaminates adenosine-34 (the first, also called wobble position of the anticodon) to inosine in many tRNAs. Inosine-34 allows the decoding of 3 different nucleotides at the third position of mRNA codons, as inosine is able to pair with U, C, and A. The wobble inosine tRNA modification is essential for cell cycle progression in the G1/S and G2/M transitions in fission yeast. The polypeptide is tRNA-specific adenosine deaminase subunit tad3 (tad3) (Schizosaccharomyces pombe (strain 972 / ATCC 24843) (Fission yeast)).